Here is a 397-residue protein sequence, read N- to C-terminus: Phosphoglycerate kinase (397 aa).

Substrate contacts are provided by residues 26–28, Arg-42, 65–68, Arg-119, and Arg-152; these read DLN and HLGR. ATP-binding positions include Lys-203, Glu-325, and 351-354; that span reads GGDT.

The protein belongs to the phosphoglycerate kinase family. In terms of assembly, monomer.

It is found in the cytoplasm. It catalyses the reaction (2R)-3-phosphoglycerate + ATP = (2R)-3-phospho-glyceroyl phosphate + ADP. Its pathway is carbohydrate degradation; glycolysis; pyruvate from D-glyceraldehyde 3-phosphate: step 2/5. This chain is Phosphoglycerate kinase, found in Bordetella bronchiseptica (strain ATCC BAA-588 / NCTC 13252 / RB50) (Alcaligenes bronchisepticus).